The following is a 283-amino-acid chain: Thymidylate synthase (283 aa).

R22 is a binding site for dUMP. Residue C160 is the Nucleophile of the active site. Residues 180-183 (RSCD), N191, and 221-223 (HIY) each bind dUMP. D183 provides a ligand contact to (6R)-5,10-methylene-5,6,7,8-tetrahydrofolate. Position 282 (S282) interacts with (6R)-5,10-methylene-5,6,7,8-tetrahydrofolate.

It belongs to the thymidylate synthase family. Bacterial-type ThyA subfamily. In terms of assembly, homodimer.

The protein localises to the cytoplasm. The enzyme catalyses dUMP + (6R)-5,10-methylene-5,6,7,8-tetrahydrofolate = 7,8-dihydrofolate + dTMP. It participates in pyrimidine metabolism; dTTP biosynthesis. Its function is as follows. Catalyzes the reductive methylation of 2'-deoxyuridine-5'-monophosphate (dUMP) to 2'-deoxythymidine-5'-monophosphate (dTMP) while utilizing 5,10-methylenetetrahydrofolate (mTHF) as the methyl donor and reductant in the reaction, yielding dihydrofolate (DHF) as a by-product. This enzymatic reaction provides an intracellular de novo source of dTMP, an essential precursor for DNA biosynthesis. The chain is Thymidylate synthase from Haemophilus influenzae (strain PittEE).